A 495-amino-acid chain; its full sequence is Ectonucleoside triphosphate diphosphohydrolase 2 (495 aa).

The Cytoplasmic segment spans residues A2–R4. Residues A5 to L25 form a helical membrane-spanning segment. At G26–W465 the chain is on the extracellular side. Residue N62 is glycosylated (N-linked (GlcNAc...) asparagine). C73 and C97 are joined by a disulfide. The active-site Proton acceptor is the E162. G201–Q205 serves as a coordination point for ATP. 4 disulfides stabilise this stretch: C239/C286, C267/C311, C324/C329, and C378/C400. An N-linked (GlcNAc...) asparagine glycan is attached at N297. Residues N418 and N444 are each glycosylated (N-linked (GlcNAc...) asparagine). A helical transmembrane segment spans residues V466–L486. The Cytoplasmic portion of the chain corresponds to L487 to I495.

This sequence belongs to the GDA1/CD39 NTPase family. Ca(2+) serves as cofactor. Requires Mg(2+) as cofactor.

The protein localises to the membrane. Its function is as follows. In the nervous system, could hydrolyze ATP and other nucleotides to regulate purinergic neurotransmission. Hydrolyzes ADP only to a marginal extent. This chain is Ectonucleoside triphosphate diphosphohydrolase 2 (ENTPD2), found in Gallus gallus (Chicken).